A 75-amino-acid chain; its full sequence is ATP synthase subunit epsilon, mitochondrial (75 aa).

A mitochondrion-targeting transit peptide spans 1–9 (MIRRSCALL).

This sequence belongs to the eukaryotic ATPase epsilon family. As to quaternary structure, F-type ATPases have 2 components, F(1) - the catalytic core - and F(o) - the membrane proton channel. F(1) has five subunits: alpha(3), beta(3), gamma(1), delta(1), epsilon(1), plus the additional subunit P18 (Tb427.05.1710) that is not present in F(1)F(o) ATP synthase from metazoa. Subunit P18 (Tb927.5.1710) interacts with the alpha subunit with a 1:1 stoichiometry; the interaction is direct. Subunit gamma is part of the central stalk. F(o) has three main subunits: a, b and c. The trypanosomal ATPase complex contains additional subunits that are not present in the F(1)F(o) ATP synthase from metazoa.

The protein localises to the mitochondrion. It localises to the mitochondrion inner membrane. In terms of biological role, mitochondrial membrane ATP synthase (F(1)F(o) ATP synthase) produces ATP from ADP in the presence of a proton gradient across the membrane which is generated by electron transport complexes of the respiratory chain. F-type ATPases consist of two structural domains, F(1) - containing the extramembraneous catalytic core, and F(o) - containing the membrane proton channel, linked together by a central stalk and a peripheral stalk. During catalysis, ATP synthesis in the catalytic domain of F(1) is coupled via a rotary mechanism of the central stalk subunits to proton translocation. Subunits alpha and beta form the catalytic core in F(1). Rotation of the central stalk against the surrounding alpha(3)beta(3) subunits leads to hydrolysis of ATP in three separate catalytic sites on the beta subunits. Contrary to the procyclic, insect form that requires F(1)F(o) ATP synthase for ATP synthesis, the bloodstream form relies on ATP hydrolysis by F(1)F(o) ATP synthase to maintain its mitochondrial membrane potential. In Trypanosoma brucei brucei, this protein is ATP synthase subunit epsilon, mitochondrial.